Reading from the N-terminus, the 1547-residue chain is ABC multidrug transporter atrF (1547 aa).

Disordered regions lie at residues 1 to 66 and 85 to 123; these read MADG…RRGA and TRSV…IDGD. The segment covering 10-19 has biased composition (polar residues); sequence SATSTTMETN. Positions 36-47 are enriched in low complexity; that stretch reads SSSMTATSSELS. Residues 51 to 66 are compositionally biased toward basic and acidic residues; the sequence is RWGERDQGEPVSRRGA. Over residues 111–123 the composition is skewed to acidic residues; the sequence is KAIDEEDSTIDGD. One can recognise an ABC transporter 1 domain in the interval 197–439; that stretch reads IPQLRFGKQP…FVNLGFHCPE (243 aa). Asparagine 299 and asparagine 363 each carry an N-linked (GlcNAc...) asparagine glycan. 7 helical membrane passes run 552–572, 586–606, 635–655, 657–677, 698–718, 722–742, and 804–824; these read LYTK…LFYG, ALFF…MPAV, FPAI…MTGL, VTAS…FSIT, GIAL…QGLI, IWFG…AVLT, and FGVV…AAEF. In terms of domain architecture, ABC transporter 2 spans 892-1130; the sequence is FTWSNVEYTV…DVIKYFADRG (239 aa). N-linked (GlcNAc...) asparagine glycosylation is present at asparagine 905. ATP is bound at residue 928–935; it reads GASGAGKT. N-linked (GlcNAc...) asparagine glycans are attached at residues asparagine 980 and asparagine 999. 8 helical membrane passes run 1230–1250, 1260–1280, 1309–1329, 1334–1354, 1356–1376, 1397–1417, 1491–1511, and 1520–1540; these read FVSV…GNSI, IFLI…KFYI, IPMA…PVGF, STAG…SSWG, WICA…FFFV, YWMY…SSIF, CFGI…FFIY, and FGMG…KGVF.

The protein belongs to the ABC transporter superfamily. ABCG family. PDR (TC 3.A.1.205) subfamily.

The protein resides in the cell membrane. It catalyses the reaction voriconazole(in) + ATP + H2O = voriconazole(out) + ADP + phosphate + H(+). The catalysed reaction is fluconazole(in) + ATP + H2O = fluconazole(out) + ADP + phosphate + H(+). Pleiotropic ABC efflux transporter involved in the basal level of azole susceptibility. Confers resistance to fluconazole and voriconazole. This chain is ABC multidrug transporter atrF, found in Aspergillus fumigatus (strain ATCC MYA-4609 / CBS 101355 / FGSC A1100 / Af293) (Neosartorya fumigata).